The primary structure comprises 534 residues: Allene oxide synthase 1, chloroplastic (534 aa).

Disordered regions lie at residues 1 to 31 and 43 to 71; these read MAST…SSYR and EIPP…LPAQ. The transit peptide at 1-69 directs the protein to the chloroplast; that stretch reads MASTSLSLPS…SPPVKQAKLP (69 aa). Low complexity-rich tracts occupy residues 17 to 31 and 43 to 62; these read SHTS…SSYR and EIPP…SSPP. Residues lysine 149, histidine 180, and lysine 184 each contribute to the heme b site. Residues asparagine 337 and lysine 343 each coordinate (13S)-hydroperoxy-(9Z,11E)-octadecadienoate. (13S)-hydroperoxy-(9Z,11E,15Z)-octadecatrienoate is bound at residue asparagine 337. Heme b is bound by residues lysine 485 and cysteine 487.

The protein belongs to the cytochrome P450 family. The cofactor is heme b. In terms of tissue distribution, expressed in flowers. Detected in stems and roots, but not in leaves and fruits under non-inducing conditions.

It localises to the plastid. It is found in the chloroplast. It carries out the reaction (13S)-hydroperoxy-(9Z,11E,15Z)-octadecatrienoate = (9Z,13S,15Z)-12,13-epoxyoctadeca-9,11,15-trienoate + H2O. The enzyme catalyses (13S)-hydroperoxy-(9Z,11E)-octadecadienoate = (9Z,13S)-12,13-epoxyoctadeca-9,11-dienoate + H2O. In terms of biological role, cytochrome P450 of the CYP74A subfamily involved in the biosynthesis of jasmonic acid from lipoxygenase-derived hydroperoxides of free fatty acids. Catalyzes the synthesis of unstable allene oxide, which is further converted spontaneously by hydrolysis or cyclization. Can use 13S-hydroperoxy-9(Z),11(E),15(Z)-octadecatrienoic acid (13-HPOT) and 13S-hydroperoxy-9(Z),11(E)-octadecadienoic acid (13-HPOD) as substrates. The protein is Allene oxide synthase 1, chloroplastic of Solanum lycopersicum (Tomato).